Reading from the N-terminus, the 104-residue chain is uncharacterized protein (104 aa).

Residues 58–71 are compositionally biased toward basic and acidic residues; it reads PERDRARRDRDHHP. The interval 58 to 84 is disordered; it reads PERDRARRDRDHHPWSRSRSQLSPRMA.

This is an uncharacterized protein from Mycobacterium tuberculosis (strain ATCC 25618 / H37Rv).